The sequence spans 253 residues: Phycoerythrobilin:ferredoxin oxidoreductase (253 aa).

Belongs to the HY2 family.

It catalyses the reaction (3Z)-phycoerythrobilin + oxidized 2[4Fe-4S]-[ferredoxin] = 15,16-dihydrobiliverdin + reduced 2[4Fe-4S]-[ferredoxin] + 2 H(+). In terms of biological role, catalyzes the two-electron reduction of the C2 and C3(1) diene system of 15,16-dihydrobiliverdin. This Prochlorococcus marinus (strain MIT 9301) protein is Phycoerythrobilin:ferredoxin oxidoreductase.